Consider the following 490-residue polypeptide: Cytochrome P450 71D11 (490 aa).

Heme is bound at residue Cys-427.

The protein belongs to the cytochrome P450 family. It depends on heme as a cofactor.

The chain is Cytochrome P450 71D11 (CYP71D11) from Lotus japonicus (Lotus corniculatus var. japonicus).